A 443-amino-acid polypeptide reads, in one-letter code: Chorionicgonadotropic hormone-like protein (443 aa).

Residues 263–286 show a composition bias toward basic residues; sequence RCAGRPCPRRHRRPCNASKSHRPM. A disordered region spans residues 263-292; sequence RCAGRPCPRRHRRPCNASKSHRPMRMQQRD.

It to mammalian CGHB.

Its subcellular location is the secreted. The protein resides in the cell wall. Functionally, cell wall protein that resembles the beta subunit of human chorionic gonadotropin. Stimulates growth and change in morphology. The polypeptide is Chorionicgonadotropic hormone-like protein (xcg) (Stenotrophomonas maltophilia (Pseudomonas maltophilia)).